We begin with the raw amino-acid sequence, 205 residues long: Large ribosomal subunit protein uL4 (205 aa).

It belongs to the universal ribosomal protein uL4 family. As to quaternary structure, part of the 50S ribosomal subunit.

In terms of biological role, one of the primary rRNA binding proteins, this protein initially binds near the 5'-end of the 23S rRNA. It is important during the early stages of 50S assembly. It makes multiple contacts with different domains of the 23S rRNA in the assembled 50S subunit and ribosome. Functionally, forms part of the polypeptide exit tunnel. The polypeptide is Large ribosomal subunit protein uL4 (Dinoroseobacter shibae (strain DSM 16493 / NCIMB 14021 / DFL 12)).